Reading from the N-terminus, the 357-residue chain is Phosphoribosylformylglycinamidine cyclo-ligase (357 aa).

It belongs to the AIR synthase family.

It localises to the cytoplasm. It catalyses the reaction 2-formamido-N(1)-(5-O-phospho-beta-D-ribosyl)acetamidine + ATP = 5-amino-1-(5-phospho-beta-D-ribosyl)imidazole + ADP + phosphate + H(+). It participates in purine metabolism; IMP biosynthesis via de novo pathway; 5-amino-1-(5-phospho-D-ribosyl)imidazole from N(2)-formyl-N(1)-(5-phospho-D-ribosyl)glycinamide: step 2/2. The protein is Phosphoribosylformylglycinamidine cyclo-ligase of Rhizobium johnstonii (strain DSM 114642 / LMG 32736 / 3841) (Rhizobium leguminosarum bv. viciae).